The sequence spans 1144 residues: MTKRIRQPIIAVLGHVDHGKCLLPDEKVILPEHGPITLKGLFDLAKETVVADNEKEIRKLGAKLTIVGEDGRLRVLESPYVWKVRHRGKMLRVKLKNWHSVSVTPEHPFLTTRGWVRADQLKPGDYVAVPRVIHGNESDERFVSFVYEKLKNDELIAKLRGEVLSKISSEFKGDRAYKVERNVFRWEDIERLNLWDEVERVAFTPRMHRSGKPLHYVKLPRSPEEWEAFFYFAGVMFGDGSQDKIANNDVEVYEELKKLSVLGVAVKRVERTTSYEIELTNGKNALLRLLRVLFEYPERQKAKSIRVPRILFIAPRKYVSRFLRGYFDADGHVSLKDARIEVTSASQEFLEDLSLLLLRFGIVSKIYRSDYTTLVISGRRNLDLFRRYIGFSVKNKAEALEKAIKKSRRSESYPIFEELKRLRLLFGFTRTELNSNVPFYGKYESEEAPSYETLMRILDAIEKGSINLDKKIAVLEGRIRDHNYIKAFEKDGLIKDGKLTELGRELLEVWRNREFDSSDVDYIRNLAENLVFIPVEDIEEFEYEGYVYDVTTETHNFVANGILVHNTTLLDRIRHTNVAGKEAGGITQHIGATEVPIDVVKQLAGPLIKLWKGEIKLPGLLFIDTPGHEAFTSLRARGGSLADLAVLVVDINEGFQPQTIESIEILRRYRTPFIVAANKIDRIKGWVIEEDEPFLVNIKKQDQRAIQELETKLWELIGKFYEMGFNANRFDRVQDFTRELAIVPISAKYGIGIPELLVLIAGLSQKYLEEKLKIEVEGPARGTILEVREEVGLGTTIDVIIYDGTLRKDDTIVVGGKDKAIVTKIRALLKPKPLDEIRDPRFRFDQVDEVTAAAGVKIAAPGLEEALAGSPVIAARSEEEIEKAKQEILSQIQSVVINTGKIGVIVKADTLGSLEALSKELQEKGIPIRKADVGNISKTDVMEALSVKEEEPKYGVVLGFNVKVNEDAEEVANAKGVPIFVGNIIYKLIEDYEAWVKEEEEKRKRELLKNVTFPGVIRLYPDERYVFRRSKPAIVGVEVLEGRIRPGVTLIKETGEKVGVIKSIKNKNDFVQEAKKGDAVAIAIEGAIVGRHIHPGETLYVDLSKNDVIILAKQLKDELEETDIKALKMTAKVKAKEDPFWRAV.

Residues F232–I362 enclose the DOD-type homing endonuclease domain. Positions T551–L768 constitute a tr-type G domain. Residues D624–H628 and N678–D681 each bind GTP.

The protein belongs to the TRAFAC class translation factor GTPase superfamily. Classic translation factor GTPase family. IF-2 subfamily. This protein undergoes a protein self splicing that involves a post-translational excision of the intervening region (intein) followed by peptide ligation.

Its function is as follows. Function in general translation initiation by promoting the binding of the formylmethionine-tRNA to ribosomes. Seems to function along with eIF-2. This Thermococcus kodakarensis (strain ATCC BAA-918 / JCM 12380 / KOD1) (Pyrococcus kodakaraensis (strain KOD1)) protein is Probable translation initiation factor IF-2 (infB).